The sequence spans 367 residues: NADH-quinone oxidoreductase subunit D (367 aa).

It belongs to the complex I 49 kDa subunit family. As to quaternary structure, NDH-1 is composed of 14 different subunits. Subunits NuoB, C, D, E, F, and G constitute the peripheral sector of the complex.

It is found in the cell membrane. It catalyses the reaction a quinone + NADH + 5 H(+)(in) = a quinol + NAD(+) + 4 H(+)(out). Functionally, NDH-1 shuttles electrons from NADH, via FMN and iron-sulfur (Fe-S) centers, to quinones in the respiratory chain. The immediate electron acceptor for the enzyme in this species is believed to be a menaquinone. Couples the redox reaction to proton translocation (for every two electrons transferred, four hydrogen ions are translocated across the cytoplasmic membrane), and thus conserves the redox energy in a proton gradient. The chain is NADH-quinone oxidoreductase subunit D from Geobacillus kaustophilus (strain HTA426).